Consider the following 146-residue polypeptide: UPF0178 protein BCA_3127 (146 aa).

The protein belongs to the UPF0178 family.

The sequence is that of UPF0178 protein BCA_3127 from Bacillus cereus (strain 03BB102).